A 260-amino-acid chain; its full sequence is DNA import protein CedA (260 aa).

Helical transmembrane passes span 13–33 (LLAS…VPVY), 47–67 (IYVV…GELL), 110–130 (ALIQ…ALTF), 140–160 (IVYQ…SIPF), 169–189 (AFIG…QFLA), and 220–240 (IITS…GFSM).

Forms a complex composed of CedA, CedA1 and CedA2.

The protein resides in the cell membrane. Functionally, part of the Ced system, which is involved in DNA import. The polypeptide is DNA import protein CedA (Sulfolobus acidocaldarius (strain ATCC 33909 / DSM 639 / JCM 8929 / NBRC 15157 / NCIMB 11770)).